The chain runs to 1220 residues: DNA-directed RNA polymerase subunit beta (1220 aa).

It belongs to the RNA polymerase beta chain family. The RNAP catalytic core consists of 2 alpha, 1 beta, 1 beta' and 1 omega subunit. When a sigma factor is associated with the core the holoenzyme is formed, which can initiate transcription.

It carries out the reaction RNA(n) + a ribonucleoside 5'-triphosphate = RNA(n+1) + diphosphate. Functionally, DNA-dependent RNA polymerase catalyzes the transcription of DNA into RNA using the four ribonucleoside triphosphates as substrates. The protein is DNA-directed RNA polymerase subunit beta of Mesomycoplasma hyopneumoniae (strain 232) (Mycoplasma hyopneumoniae).